A 245-amino-acid chain; its full sequence is MATSLTPADPLQEAAIVLFSGGQDSATCLAWALSRFGRVETVGFDYGQRHAVELACRARLRDGMAALDPDWATRLGQDHTLALDALGTVSDTALTRDAAITMNENGLPSTFVPGRNLIFLTFAAALAARRGARHIVGGMCETDYSGYPDCRDDTIKAMQVALNLGMASRYVLHTPLMWIDKAETWRMAEGLGGADLVELINRESHSCYLGVRDVMHPWGHGCGTCPACMLRRAGWERYVADGADA.

19 to 29 (FSGGQDSATCL) is an ATP binding site. Zn(2+) is bound by residues Cys207, Cys222, Cys225, and Cys228.

The protein belongs to the QueC family. Requires Zn(2+) as cofactor.

It carries out the reaction 7-carboxy-7-deazaguanine + NH4(+) + ATP = 7-cyano-7-deazaguanine + ADP + phosphate + H2O + H(+). Its pathway is purine metabolism; 7-cyano-7-deazaguanine biosynthesis. Catalyzes the ATP-dependent conversion of 7-carboxy-7-deazaguanine (CDG) to 7-cyano-7-deazaguanine (preQ(0)). The sequence is that of 7-cyano-7-deazaguanine synthase from Gluconacetobacter diazotrophicus (strain ATCC 49037 / DSM 5601 / CCUG 37298 / CIP 103539 / LMG 7603 / PAl5).